A 431-amino-acid chain; its full sequence is 3-deoxy-D-manno-octulosonic acid transferase (431 aa).

Residues 5–27 (WLTSRLYDAFLVCAFFVSAPRIF) form a helical; Signal-anchor membrane-spanning segment. The Proton acceptor role is filled by Glu-67. CMP-binding positions include 275 to 276 (PR), 315 to 317 (MGV), and 342 to 345 (NLLE).

This sequence belongs to the glycosyltransferase group 1 family. Glycosyltransferase 30 subfamily.

It is found in the cell inner membrane. The catalysed reaction is lipid IVA (E. coli) + CMP-3-deoxy-beta-D-manno-octulosonate = alpha-Kdo-(2-&gt;6)-lipid IVA (E. coli) + CMP + H(+). It catalyses the reaction alpha-Kdo-(2-&gt;6)-lipid IVA (E. coli) + CMP-3-deoxy-beta-D-manno-octulosonate = alpha-Kdo-(2-&gt;4)-alpha-Kdo-(2-&gt;6)-lipid IVA (E. coli) + CMP + H(+). The enzyme catalyses alpha-Kdo-(2-&gt;4)-alpha-Kdo-(2-&gt;6)-lipid IVA (E. coli) + CMP-3-deoxy-beta-D-manno-octulosonate = alpha-Kdo-(2-&gt;8)-alpha-Kdo-(2-&gt;4)-alpha-Kdo-(2-&gt;6)-lipid IVA (E. coli) + CMP + H(+). The protein operates within bacterial outer membrane biogenesis; LPS core biosynthesis. Its function is as follows. Involved in lipopolysaccharide (LPS) biosynthesis. Catalyzes the transfer of three 3-deoxy-D-manno-octulosonate (Kdo) residues from CMP-Kdo to lipid IV(A), the tetraacyldisaccharide-1,4'-bisphosphate precursor of lipid A. Thus generates the genus-specific LPS epitope of Chlamydia, composed of the trisaccharide alpha-Kdo-(2-&gt;8)-alpha-Kdo-(2-&gt;4)-alpha-Kdo. The sequence is that of 3-deoxy-D-manno-octulosonic acid transferase (waaA) from Chlamydia trachomatis serovar D (strain ATCC VR-885 / DSM 19411 / UW-3/Cx).